Here is a 158-residue protein sequence, read N- to C-terminus: Succinate dehydrogenase assembly factor 2, mitochondrial (158 aa).

The transit peptide at 1 to 17 (MFSANIARKVVCSVCRA) directs the protein to the mitochondrion.

It belongs to the SDHAF2 family. As to quaternary structure, interacts with sdha within the SDH catalytic dimer.

The protein resides in the mitochondrion matrix. Functionally, plays an essential role in the assembly of succinate dehydrogenase (SDH), an enzyme complex (also referred to as respiratory complex II) that is a component of both the tricarboxylic acid (TCA) cycle and the mitochondrial electron transport chain, and which couples the oxidation of succinate to fumarate with the reduction of ubiquinone (coenzyme Q) to ubiquinol. Required for flavinylation (covalent attachment of FAD) of the flavoprotein subunit sdha of the SDH catalytic dimer. This Danio rerio (Zebrafish) protein is Succinate dehydrogenase assembly factor 2, mitochondrial.